A 465-amino-acid chain; its full sequence is Amino-acid carrier protein AlsT (465 aa).

A run of 10 helical transmembrane segments spans residues 20-40, 82-102, 142-162, 177-197, 208-228, 241-261, 296-316, 336-356, 382-402, and 405-425; these read LFYILIGLGLFFTIRFGFIQF, VALAIATGGPGAVFWMWVVAA, WLGIVFAILITVSFGLIFNAV, VNKIVVAIVLAVLTAFIIFGG, IVPVMAGIYILIALFVVITNI, NALGFEQVVGGGIGGIIVIGA, LGVFFDTFIICTSTAFIILLY, IGGWAPTFIAVAMFLFAFSSV, IAVIAMVVYGSLSGFQIVWDM, and LFMGIMALINLIVIALLSNVA.

Belongs to the alanine or glycine:cation symporter (AGCS) (TC 2.A.25) family.

The protein resides in the cell membrane. In Bacillus subtilis (strain 168), this protein is Amino-acid carrier protein AlsT (alsT).